Here is an 83-residue protein sequence, read N- to C-terminus: ATP synthase subunit c (83 aa).

A run of 2 helical transmembrane segments spans residues 10-30 and 52-72; these read IAVA…FGLL and MFIV…IALF.

The protein belongs to the ATPase C chain family. As to quaternary structure, F-type ATPases have 2 components, F(1) - the catalytic core - and F(0) - the membrane proton channel. F(1) has five subunits: alpha(3), beta(3), gamma(1), delta(1), epsilon(1). F(0) has three main subunits: a(1), b(2) and c(10-14). The alpha and beta chains form an alternating ring which encloses part of the gamma chain. F(1) is attached to F(0) by a central stalk formed by the gamma and epsilon chains, while a peripheral stalk is formed by the delta and b chains.

It is found in the cell inner membrane. Functionally, f(1)F(0) ATP synthase produces ATP from ADP in the presence of a proton or sodium gradient. F-type ATPases consist of two structural domains, F(1) containing the extramembraneous catalytic core and F(0) containing the membrane proton channel, linked together by a central stalk and a peripheral stalk. During catalysis, ATP synthesis in the catalytic domain of F(1) is coupled via a rotary mechanism of the central stalk subunits to proton translocation. In terms of biological role, key component of the F(0) channel; it plays a direct role in translocation across the membrane. A homomeric c-ring of between 10-14 subunits forms the central stalk rotor element with the F(1) delta and epsilon subunits. In Shewanella loihica (strain ATCC BAA-1088 / PV-4), this protein is ATP synthase subunit c.